The sequence spans 347 residues: NADH-ubiquinone oxidoreductase chain 2 (347 aa).

Helical transmembrane passes span 1 to 21 (MNPL…LITA), 25 to 45 (HWFL…PVLT), 55 to 75 (AAIK…MAIL), 96 to 116 (LMIL…FWVP), 123 to 143 (TLTS…SIMY), 145 to 165 (IFPV…IMVG), 178 to 198 (ILAY…PYNP), 199 to 219 (NITI…FLAL), 237 to 257 (LTWL…LPPL), 274 to 294 (GTLI…YFYM), and 324 to 344 (LLLP…PLTF).

Belongs to the complex I subunit 2 family. Core subunit of respiratory chain NADH dehydrogenase (Complex I) which is composed of 45 different subunits. Interacts with TMEM242.

Its subcellular location is the mitochondrion inner membrane. The enzyme catalyses a ubiquinone + NADH + 5 H(+)(in) = a ubiquinol + NAD(+) + 4 H(+)(out). Core subunit of the mitochondrial membrane respiratory chain NADH dehydrogenase (Complex I) which catalyzes electron transfer from NADH through the respiratory chain, using ubiquinone as an electron acceptor. Essential for the catalytic activity and assembly of complex I. This is NADH-ubiquinone oxidoreductase chain 2 from Symphalangus syndactylus (Siamang).